Reading from the N-terminus, the 100-residue chain is Large ribosomal subunit protein uL23 (100 aa).

This sequence belongs to the universal ribosomal protein uL23 family. Part of the 50S ribosomal subunit. Contacts protein L29, and trigger factor when it is bound to the ribosome.

One of the early assembly proteins it binds 23S rRNA. One of the proteins that surrounds the polypeptide exit tunnel on the outside of the ribosome. Forms the main docking site for trigger factor binding to the ribosome. The sequence is that of Large ribosomal subunit protein uL23 from Shigella dysenteriae serotype 1 (strain Sd197).